A 691-amino-acid polypeptide reads, in one-letter code: CREB-regulated transcription coactivator 2 (691 aa).

Polar residues predominate over residues Met1–Arg20. A disordered region spans residues Met1–Lys30. Ala2 carries the N-acetylalanine modification. An Asymmetric dimethylarginine; by PRMT6 modification is found at Arg51. Phosphoserine occurs at positions 70, 86, and 90. Asymmetric dimethylarginine; by PRMT6 is present on residues Arg99, Arg120, and Arg123. Residue Ser136 is modified to Phosphoserine. An asymmetric dimethylarginine; by PRMT6 mark is found at Arg161 and Arg168. Phosphothreonine is present on Thr169. Ser171 is subject to Phosphoserine; by AMPK, MARK2, SIK1 and SIK2. Residues Ala174 to Asp186 are compositionally biased toward polar residues. A disordered region spans residues Ala174–Ser195. At Thr192 the chain carries Phosphothreonine. Lys234 is covalently cross-linked (Glycyl lysine isopeptide (Lys-Gly) (interchain with G-Cter in SUMO2)). A Nuclear export signal motif is present at residues Thr271–Leu287. A Phosphoserine; by MARK2 modification is found at Ser274. 2 disordered regions span residues Asn280–Ser306 and His335–Pro491. Phosphoserine is present on residues Ser306, Ser368, Ser393, Ser433, and Ser456. Composition is skewed to low complexity over residues His335–Pro383 and Pro390–Leu411. The segment covering Ser447 to Gln468 has biased composition (polar residues). Tyr488 bears the Phosphotyrosine mark. Residues Ser489 and Ser492 each carry the phosphoserine modification. Thr501 is subject to Phosphothreonine. Residues Cys513–Gln543 form a disordered region. 3 positions are modified to phosphoserine: Ser611, Ser621, and Ser622.

This sequence belongs to the TORC family. Binds, as a tetramer, through its N-terminal region, with the bZIP domain of CREB1. 'Arg-314' in the bZIP domain of CREB1 is essential for this interaction. Interaction, via its C-terminal, with TAF4, enhances recruitment of TAF4 to CREB1. Interacts with SIK2. Interacts with 14-3-3 proteins, YWHAB and YWHAG. Interacts (probably when phosphorylated at Ser-171) with YWHAE. Interacts with calmodulin-dependent catalytic subunit PPP3CA/calcineurin A. Interaction with COP1 mediates nuclear export and degradation of CRTC2. Post-translationally, phosphorylation/dephosphorylation states of Ser-171 are required for regulating transduction of CREB activity. CRTCs/TORCs are inactive when phosphorylated, and active when dephosphorylated at this site. This primary site of phosphorylation, is regulated by cAMP and calcium levels and is dependent on the phosphorylation of SIKs (SIK1 and SIK2) by LKB1. Following adenylyl cyclase activation, dephosphorylated at Ser-171 by PPP3CA/calcineurin A resulting in CRTC2 dissociation from 14-3-3 proteins and PPP3CA. Both insulin and AMPK increase this phosphorylation of CRTC2 while glucagon suppresses it. Phosphorylation at Ser-274 by MARK2 is induced under low glucose conditions and dephosphorylated in response to glucose influx. Phosphorylation at Ser-274 promotes interaction with 14-3-3 proteins and translocation to the cytoplasm. In terms of processing, asymmetric dimethylation of arginine resisues by PRMT6 enhances the association of CRTC2 with CREB on the promoters of gluconeogenic genes.

The protein resides in the cytoplasm. It localises to the nucleus. Functionally, transcriptional coactivator for CREB1 which activates transcription through both consensus and variant cAMP response element (CRE) sites. Acts as a coactivator, in the SIK/TORC signaling pathway, being active when dephosphorylated and acts independently of CREB1 'Ser-133' phosphorylation. Enhances the interaction of CREB1 with TAF4. Regulates gluconeogenesis as a component of the LKB1/AMPK/TORC2 signaling pathway. Regulates the expression of specific genes such as the steroidogenic gene, StAR. Potent coactivator of PPARGC1A and inducer of mitochondrial biogenesis in muscle cells. This is CREB-regulated transcription coactivator 2 (Crtc2) from Rattus norvegicus (Rat).